A 179-amino-acid chain; its full sequence is Putative 5'(3')-deoxyribonucleotidase (179 aa).

Residue aspartate 9 is the Nucleophile of the active site. Residues aspartate 9, aspartate 11, and aspartate 135 each contribute to the Mg(2+) site. Aspartate 11 functions as the Proton donor in the catalytic mechanism.

It belongs to the 5'(3')-deoxyribonucleotidase family. Requires Mg(2+) as cofactor.

Functionally, dephosphorylates the 5' and 2'(3')-phosphates of deoxyribonucleotides. This is Putative 5'(3')-deoxyribonucleotidase from Staphylococcus epidermidis (strain ATCC 35984 / DSM 28319 / BCRC 17069 / CCUG 31568 / BM 3577 / RP62A).